The chain runs to 901 residues: Probable inorganic carbon transporter subunit DabA (901 aa).

Zn(2+)-binding residues include cysteine 424, aspartate 426, histidine 606, and cysteine 621.

It belongs to the inorganic carbon transporter (TC 9.A.2) DabA family. Forms a complex with DabB. The cofactor is Zn(2+).

Its subcellular location is the cell membrane. Part of an energy-coupled inorganic carbon pump. In Staphylococcus aureus (strain MSSA476), this protein is Probable inorganic carbon transporter subunit DabA.